The chain runs to 327 residues: Prenyl transferase janC (327 aa).

The helical transmembrane segment at F3–F23 threads the bilayer. Isopentenyl diphosphate is bound by residues K63 and H96. Mg(2+) is bound by residues D103 and D107. The dimethylallyl diphosphate site is built by R112 and K196. An N-linked (GlcNAc...) asparagine glycan is attached at N211.

This sequence belongs to the FPP/GGPP synthase family.

It is found in the membrane. The protein operates within secondary metabolite biosynthesis. Its function is as follows. Prenyl transferase; part of the gene cluster that mediates the biosynthesis of the indole diterpenes janthitremanes such as shearinine K or shearinine A. The geranylgeranyl diphosphate (GGPP) synthase janG catalyzes the first step in janthitremane biosynthesis via conversion of farnesyl pyrophosphate and isopentyl pyrophosphate into geranylgeranyl pyrophosphate (GGPP). Condensation of indole-3-glycerol phosphate with GGPP by the prenyl transferase janC then forms 3-geranylgeranylindole (3-GGI). Epoxidation by the FAD-dependent monooxygenase janM leads to a epoxidized-GGI that is substrate of the terpene cyclase janB for cyclization to yield paspaline. Paspaline is subsequently converted to 13-desoxypaspaline by the cytochrome P450 monooxygenase janP, via beta-PC-M6 in a series of alpha-face oxidations. The cytochrome P450 monooxygenase janQ is proposed to carry out sequential beta-face oxidation steps at C-7 and C-13 of 13-desoxypaspaline to form paspalicine and paspalinine respectively. The indole diterpene prenyltransferase janD may then convert paspalinine into shearinine K which is substrate of janO and/or additional enzymes for oxidation and cyclization to generate shearinine A. This Penicillium janthinellum (Penicillium vitale) protein is Prenyl transferase janC.